Consider the following 2263-residue polypeptide: Collagen alpha-6(VI) chain (2263 aa).

The signal sequence occupies residues 1–19; the sequence is MMLLILFLVIICSHISVNQ. Residues 20-1391 form a nonhelical region region; sequence DSGPEYADVV…TCCCLFCKCI (1372 aa). VWFA domains are found at residues 27 to 206, 229 to 411, 436 to 606, 622 to 791, and 809 to 982; these read DVVF…IKDV, DVVF…RNQI, DIYL…RNQV, DIMF…EDDL, and DVVF…FSDV. N-linked (GlcNAc...) asparagine glycans are attached at residues asparagine 198, asparagine 275, asparagine 288, asparagine 347, and asparagine 520. Residues asparagine 930 and asparagine 988 are each glycosylated (N-linked (GlcNAc...) asparagine). VWFA domains lie at 1000 to 1171 and 1187 to 1371; these read DLVF…NKRI and DVVV…GSRL. Asparagine 1290 carries an N-linked (GlcNAc...) asparagine glycan. The segment at 1392-1725 is triple-helical region; sequence GGDGTMGDPG…GRKGVKGAKG (334 aa). A disordered region spans residues 1397 to 1723; that stretch reads MGDPGPPGKR…PPGRKGVKGA (327 aa). The segment covering 1498 to 1508 has biased composition (basic and acidic residues); sequence TPGDRGAKGLR. Residues 1508 to 1510 carry the Cell attachment site motif; it reads RGD. Residues 1547-1559 are compositionally biased toward basic residues; the sequence is SRRKTAAHGRRGH. Positions 1680-1689 are enriched in gly residues; sequence GDPGGPGETG. The segment at 1726–2263 is nonhelical region; sequence LASFSTCELI…MIESAPKQHD (538 aa). VWFA domains follow at residues 1757-1937 and 1965-2166; these read ELVF…ERLQ and DAAF…INSI.

This sequence belongs to the type VI collagen family. As to quaternary structure, trimers composed of three different chains: alpha-1(VI), alpha-2(VI), and alpha-3(VI) or alpha-5(VI) or alpha-6(VI). In terms of processing, prolines at the third position of the tripeptide repeating unit (G-X-Y) are hydroxylated in some or all of the chains.

Its subcellular location is the secreted. The protein localises to the extracellular space. It is found in the extracellular matrix. Functionally, collagen VI acts as a cell-binding protein. This is Collagen alpha-6(VI) chain (COL6A6) from Homo sapiens (Human).